The following is a 450-amino-acid chain: Phosphoglucosamine mutase 2 (450 aa).

Residue Ser-101 is the Phosphoserine intermediate of the active site. Mg(2+)-binding residues include Ser-101, Asp-245, Asp-247, and Asp-249. Ser-101 carries the post-translational modification Phosphoserine.

It belongs to the phosphohexose mutase family. Mg(2+) is required as a cofactor. Activated by phosphorylation.

It carries out the reaction alpha-D-glucosamine 1-phosphate = D-glucosamine 6-phosphate. Catalyzes the conversion of glucosamine-6-phosphate to glucosamine-1-phosphate. This chain is Phosphoglucosamine mutase 2, found in Shewanella sp. (strain MR-4).